The chain runs to 433 residues: MRAEGDGGLERFCSPGKGRGLRALQPFQVGDLLFSCPAYAYVLTVSERGNHCEFCFARKEGLSKCGRCKQAFYCNVECQREDWPMHKLECSPMVVFGENWNPSETVRLTARILAKQKIHPERTPSEKLLAVKEFESHLDKLDNEKRDLIQSDIAALHHFYSKHLEFPDNDSLVVLFAQVNCNGFTIEDEELSHLGSAIFPDVALMNHSCCPNVIVTYKGTLAEVRAVQEIHPGEEVFTSYIDLLYPTEDRNDRLRDSYFFTCECQECTTKDKDKAKVEIRKLNDPPKAETIRDMVRYARNVIEEFRRAKHYKSPSELLEICELSQEKMSCVFEDSNVYMLHMMYQAMGVCLYMQDWEGALRYGQKIIQPYSKHYPLYSLNVASMWLKLGRLYMGLENKAAGERALKKAIAIMEVAHGKDHPYISEIKQEIESH.

One can recognise an SET domain in the interval 7–241 (GGLERFCSPG…PGEEVFTSYI (235 aa)). 17-19 (KGR) lines the S-adenosyl-L-methionine pocket. Zn(2+)-binding residues include Cys52, Cys55, Cys65, Cys68, Cys74, Cys78, His86, and Cys90. The MYND-type zinc finger occupies 52–90 (CEFCFARKEGLSKCGRCKQAFYCNVECQREDWPMHKLEC). S-adenosyl-L-methionine contacts are provided by residues His137, 206 to 207 (NH), and 258 to 260 (YFF).

Belongs to the class V-like SAM-binding methyltransferase superfamily. Interacts with RNA polymerase II and HELZ. Interacts with SIN3A and HDAC1. Interacts (via MYND-type zinc finger) with EPB41L3. Interacts (via SET domain) with p53/TP53. Interacts with RB1 and HSP90AA1.

The protein resides in the cytoplasm. It localises to the cytosol. It is found in the nucleus. It carries out the reaction L-lysyl(4)-[histone H3] + 3 S-adenosyl-L-methionine = N(6),N(6),N(6)-trimethyl-L-lysyl(4)-[histone H3] + 3 S-adenosyl-L-homocysteine + 3 H(+). The enzyme catalyses L-lysyl-[protein] + S-adenosyl-L-methionine = N(6)-methyl-L-lysyl-[protein] + S-adenosyl-L-homocysteine + H(+). In terms of biological role, protein-lysine N-methyltransferase that methylates both histones and non-histone proteins, including p53/TP53 and RB1. Specifically trimethylates histone H3 'Lys-4' (H3K4me3) in vivo. The activity requires interaction with HSP90alpha. Shows even higher methyltransferase activity on p53/TP53. Monomethylates 'Lys-370' of p53/TP53, leading to decreased DNA-binding activity and subsequent transcriptional regulation activity of p53/TP53. Monomethylates RB1 at 'Lys-860'. The polypeptide is N-lysine methyltransferase SMYD2 (SMYD2) (Bos taurus (Bovine)).